A 514-amino-acid polypeptide reads, in one-letter code: MEEESLAAALHTYRAQLEQVELSLRAGTDPTQLEDLTQLRNDLQQLIELTESSLLSVRKCKLLSSLEGSASLPAPEEPAAISSQDEEYEAFRRAIGEEPQPPGAGDGASTGSKDSEEEEEEEDGSSGMKVKAPYYSTWGTLEYHNAMVVGSEQLEDGEAGVRVLYLYPTHKAMKPCPFFLDGKCRFDDSCRFSHGQVVALAELQPFAEADVASLAVGSPCLAQHSDGIWYPARITDIKSGFYTVKFDSLLLKESVLEADSIIPPLRGSDSSSSDDDDDDEEEDDAAEDSGYARVLGAGSAGSAHSSQFGGWEAHTRGIGSKLLARMGYEIGKGLGRNAEGRVEPIQAVLLPKGKSLDQCIEMQQRKKAGGKREHKAGKRRPRATGRGGGTKSARNVFDFLNEKLEGRPSGAQPGESRRAAERKGKELYNASKDSKRALSVQVAVTAQRIQQKQREIGHLQEALARNVGRDSVVSNQLELRLSGARRELVMLQQEEHSLQREQRKADTHKKMTEF.

Residues 96 to 129 are disordered; sequence GEEPQPPGAGDGASTGSKDSEEEEEEEDGSSGMK. Residues 115–124 show a composition bias toward acidic residues; that stretch reads SEEEEEEEDG. The C3H1-type zinc-finger motif lies at 171–197; sequence KAMKPCPFFLDGKCRFDDSCRFSHGQV. Disordered regions lie at residues 262–288, 363–422, and 494–514; these read IPPL…AAED, QQRK…AAER, and EEHS…MTEF. Residues 272–287 are compositionally biased toward acidic residues; sequence SSDDDDDDEEEDDAAE. Residues 315 to 373 form the G-patch domain; sequence TRGIGSKLLARMGYEIGKGLGRNAEGRVEPIQAVLLPKGKSLDQCIEMQQRKKAGGKRE. Over residues 365 to 383 the composition is skewed to basic residues; the sequence is RKKAGGKREHKAGKRRPRA.

The protein resides in the nucleus. Its function is as follows. Transcription repressor that specifically binds the 5'-GGAG[GA]A[GA]A-3' consensus sequence. Represses transcription by recruiting the chromatin multiprotein complex NuRD to target promoters. Negatively regulates expression of EGFR, a gene involved in cell proliferation, survival and migration. This is Zinc finger CCCH-type with G patch domain-containing protein (zgpat) from Xenopus tropicalis (Western clawed frog).